The primary structure comprises 536 residues: Phosphoenolpyruvate carboxykinase (ATP) (536 aa).

Positions 61, 195, and 201 each coordinate substrate. Residues Lys201, His220, and 236–244 contribute to the ATP site; that span reads GLSGTGKTT. Lys201 and His220 together coordinate Mn(2+). Asp257 contributes to the Mn(2+) binding site. Positions 285, 322, and 447 each coordinate ATP. Position 322 (Arg322) interacts with substrate.

It belongs to the phosphoenolpyruvate carboxykinase (ATP) family. Requires Mn(2+) as cofactor.

The protein resides in the cytoplasm. It catalyses the reaction oxaloacetate + ATP = phosphoenolpyruvate + ADP + CO2. It participates in carbohydrate biosynthesis; gluconeogenesis. Involved in the gluconeogenesis. Catalyzes the conversion of oxaloacetate (OAA) to phosphoenolpyruvate (PEP) through direct phosphoryl transfer between the nucleoside triphosphate and OAA. The protein is Phosphoenolpyruvate carboxykinase (ATP) of Rhizobium johnstonii (strain DSM 114642 / LMG 32736 / 3841) (Rhizobium leguminosarum bv. viciae).